Consider the following 51-residue polypeptide: Small integral membrane protein 38 (51 aa).

The helical transmembrane segment at 13–33 (PLLALLVVILLARLILWSCLG) threads the bilayer.

The protein resides in the membrane. This is Small integral membrane protein 38 from Homo sapiens (Human).